The primary structure comprises 510 residues: Calmodulin-binding receptor-like cytoplasmic kinase 3 (510 aa).

Positions 1 to 30 are cleaved as a signal peptide; that stretch reads MGGDDLSFTRLVITALFGLLMLLQIKETSA. A compositionally biased stretch (polar residues) spans 166-178; sequence VSSFEMSPSSEKI. A disordered region spans residues 166–209; sequence VSSFEMSPSSEKIPQSPFRAPPSPSRVPQSPSRYAMSPRPSRLG. Thr214 carries the post-translational modification Phosphothreonine. The Protein kinase domain occupies 225–499; the sequence is FADSHQIGEG…MEAVGKQLWA (275 aa). Residues 231-239 and Lys253 contribute to the ATP site; that span reads IGEGGFGVV. Residues 240 to 265 form a caM-binding region; that stretch reads FKGVLDDGQVVAIKRAKKEHFENLRT. The active-site Proton acceptor is the Asp350. Ser354 is subject to Phosphoserine. 2 positions are modified to phosphothreonine: Thr386 and Thr391. Tyr399 carries the phosphotyrosine modification.

The protein belongs to the protein kinase superfamily. Ser/Thr protein kinase family. As to quaternary structure, interacts with calmodulin (CaM) in a Ca(2+)-dependent manner.

The protein resides in the cytoplasm. It catalyses the reaction L-seryl-[protein] + ATP = O-phospho-L-seryl-[protein] + ADP + H(+). It carries out the reaction L-threonyl-[protein] + ATP = O-phospho-L-threonyl-[protein] + ADP + H(+). The polypeptide is Calmodulin-binding receptor-like cytoplasmic kinase 3 (CRCK3) (Arabidopsis thaliana (Mouse-ear cress)).